A 179-amino-acid chain; its full sequence is Large ribosomal subunit protein uL5 (179 aa).

This sequence belongs to the universal ribosomal protein uL5 family. As to quaternary structure, part of the 50S ribosomal subunit; part of the 5S rRNA/L5/L18/L25 subcomplex. Contacts the 5S rRNA and the P site tRNA. Forms a bridge to the 30S subunit in the 70S ribosome.

Its function is as follows. This is one of the proteins that bind and probably mediate the attachment of the 5S RNA into the large ribosomal subunit, where it forms part of the central protuberance. In the 70S ribosome it contacts protein S13 of the 30S subunit (bridge B1b), connecting the 2 subunits; this bridge is implicated in subunit movement. Contacts the P site tRNA; the 5S rRNA and some of its associated proteins might help stabilize positioning of ribosome-bound tRNAs. The sequence is that of Large ribosomal subunit protein uL5 from Shewanella putrefaciens (strain CN-32 / ATCC BAA-453).